We begin with the raw amino-acid sequence, 415 residues long: Probable tRNA pseudouridine synthase D (415 aa).

The active-site Nucleophile is Asp-83. The 221-residue stretch at 158–378 folds into the TRUD domain; the sequence is GFPNYFGYQR…PGRRRELLIR (221 aa).

Belongs to the pseudouridine synthase TruD family.

It carries out the reaction uridine(13) in tRNA = pseudouridine(13) in tRNA. Functionally, could be responsible for synthesis of pseudouridine from uracil-13 in transfer RNAs. This Thermococcus gammatolerans (strain DSM 15229 / JCM 11827 / EJ3) protein is Probable tRNA pseudouridine synthase D.